Reading from the N-terminus, the 326-residue chain is DNA polymerase III subunit delta' (326 aa).

In terms of assembly, DNA polymerase III contains a core (composed of alpha, epsilon and theta chains) that associates with a tau subunit. This core dimerizes to form the POLIII' complex. PolIII' associates with the gamma complex (composed of gamma, delta, delta', psi and chi chains) and with the beta chain to form the complete DNA polymerase III complex.

The catalysed reaction is DNA(n) + a 2'-deoxyribonucleoside 5'-triphosphate = DNA(n+1) + diphosphate. Its function is as follows. DNA polymerase III is a complex, multichain enzyme responsible for most of the replicative synthesis in bacteria. This DNA polymerase also exhibits 3' to 5' exonuclease activity. This chain is DNA polymerase III subunit delta' (holB), found in Buchnera aphidicola subsp. Acyrthosiphon pisum (strain APS) (Acyrthosiphon pisum symbiotic bacterium).